The sequence spans 307 residues: Ribonuclease Z (307 aa).

Zn(2+) contacts are provided by histidine 61, histidine 63, aspartate 65, histidine 66, histidine 138, aspartate 208, and histidine 264. Aspartate 65 functions as the Proton acceptor in the catalytic mechanism.

The protein belongs to the RNase Z family. As to quaternary structure, homodimer. The cofactor is Zn(2+).

The catalysed reaction is Endonucleolytic cleavage of RNA, removing extra 3' nucleotides from tRNA precursor, generating 3' termini of tRNAs. A 3'-hydroxy group is left at the tRNA terminus and a 5'-phosphoryl group is left at the trailer molecule.. Its function is as follows. Zinc phosphodiesterase, which displays some tRNA 3'-processing endonuclease activity. Probably involved in tRNA maturation, by removing a 3'-trailer from precursor tRNA. Also shows activity toward a broad range of substrates, such as intron containing pre-tRNAs, 5' extended precursors and non-RNA substrates. In Pyrococcus furiosus (strain ATCC 43587 / DSM 3638 / JCM 8422 / Vc1), this protein is Ribonuclease Z.